A 457-amino-acid polypeptide reads, in one-letter code: Nuclear hormone receptor family member odr-7 (457 aa).

2 disordered regions span residues 57–95 (EQPNNNVPQQPWGPFPPAFGGRPSGEQTDGNPGEFDNDA) and 230–252 (KQESSDDSTLKNLKKSDQQLQQP). The segment at residues 327–407 (LHDCQVCLST…IGMLPENVQH (81 aa)) is a DNA-binding region (nuclear receptor). 2 NR C4-type zinc fingers span residues 330 to 351 (CQVCLSTHANGLHFGARTCAAC) and 367 to 395 (CKRNQRCNNASRDGTGYRKICRSCRMKRC). The interval 435–457 (QPSGSAAQPITVSSSESPRHTTN) is disordered.

It belongs to the nuclear hormone receptor family. NR0 subfamily. Heterodimer with a partner that confers DNA binding capacity or a nuclear hormone receptor whose DNA binding it inhibits. Expressed predominantly in the AWA neurons.

The protein resides in the nucleus. It is found in the cytoplasm. Its subcellular location is the perinuclear region. Its function is as follows. Required for the function of one pair of chemosensory neurons called AWA neurons that are involved in chemotaxis to volatile odorants. Acts in a pathway that specifies olfactory neuronal fate. Regulates the transcription of olfactory signaling molecules such as odr-10 that specify AWA neuron identity and function. Represses the expression in AWA neurons of factors such as str-2 which specify AWC neuron identity. This is Nuclear hormone receptor family member odr-7 (odr-7) from Caenorhabditis elegans.